Consider the following 316-residue polypeptide: Phosphoglycerate mutase-like protein AT74 (316 aa).

Histidine 17 serves as the catalytic Tele-phosphohistidine intermediate. Residue glutamate 106 is the Proton donor/acceptor of the active site. The segment at 275–316 (KECETEATEDREEEEEEEGKRVNLLTSSEYSNEPELYNGQCC) is disordered. The span at 279–291 (TEATEDREEEEEE) shows a compositional bias: acidic residues.

This sequence belongs to the phosphoglycerate mutase family. Expressed in roots, leaves, stems, flowers and siliques.

Phosphoglycerate mutase-like protein lacking PGM activity. May play a role in carbohydrates metabolism. The sequence is that of Phosphoglycerate mutase-like protein AT74 from Arabidopsis thaliana (Mouse-ear cress).